The sequence spans 193 residues: MVEYILLIISTALINNFVLVKFLGLCPFMGVSKKVETAIGMGMATTFVLTVASLSAYLVETYLLIPLEAEFLRTLVFILVIAVIVQLTEMIVHKTSSALYRLLGIYLPLITTNCAVLGVALLNVNLSNNLVQSVLYGFGAAAGFSLVLVLFSALRERLVAADVPRAFQGASIALITAGLMSLAFMGFTGLVKI.

Transmembrane regions (helical) follow at residues 5–25, 39–59, 65–85, 102–122, 134–154, and 171–191; these read ILLI…FLGL, IGMG…AYLV, IPLE…AVIV, LLGI…VALL, VLYG…FSAL, and SIAL…TGLV.

The protein belongs to the NqrDE/RnfAE family. The complex is composed of six subunits: RnfA, RnfB, RnfC, RnfD, RnfE and RnfG.

Its subcellular location is the cell inner membrane. In terms of biological role, part of a membrane-bound complex that couples electron transfer with translocation of ions across the membrane. The sequence is that of Ion-translocating oxidoreductase complex subunit A from Glaesserella parasuis serovar 5 (strain SH0165) (Haemophilus parasuis).